The following is a 220-amino-acid chain: Putative pyrophosphatase PpaX (220 aa).

The active-site Nucleophile is the Asp-9.

It belongs to the HAD-like hydrolase superfamily. PpaX family. Mg(2+) is required as a cofactor.

The catalysed reaction is diphosphate + H2O = 2 phosphate + H(+). This is Putative pyrophosphatase PpaX from Caldanaerobacter subterraneus subsp. tengcongensis (strain DSM 15242 / JCM 11007 / NBRC 100824 / MB4) (Thermoanaerobacter tengcongensis).